The following is a 157-amino-acid chain: Transmembrane protein 42 (157 aa).

4 helical membrane-spanning segments follow: residues 37–57 (FWGV…AAAA), 67–87 (IGLC…MWTF), 100–120 (IASV…GYLL), and 124–144 (CQEI…TLIH).

It is found in the membrane. The sequence is that of Transmembrane protein 42 (Tmem42) from Mus musculus (Mouse).